Here is a 144-residue protein sequence, read N- to C-terminus: Superoxide dismutase [Mn], mitochondrial (144 aa).

Residues His10, His58, and Asp143 each contribute to the Mn(2+) site.

Belongs to the iron/manganese superoxide dismutase family. Homotetramer. Mn(2+) is required as a cofactor.

The protein resides in the mitochondrion matrix. It catalyses the reaction 2 superoxide + 2 H(+) = H2O2 + O2. In terms of biological role, destroys superoxide anion radicals which are normally produced within the cells and which are toxic to biological systems. This chain is Superoxide dismutase [Mn], mitochondrial, found in Eptatretus stoutii (Pacific hagfish).